The primary structure comprises 746 residues: Polyribonucleotide nucleotidyltransferase (746 aa).

Asp-515 and Asp-521 together coordinate Mg(2+). Positions 581–640 (PRVIAVKIPVDKIGEVIGPKGKMINQIQEDTGADISIEDDGTVYIGATNGPSADAARSAI) constitute a KH domain. The region spanning 652–724 (GERYLGTVVK…DRGKLSLSPV (73 aa)) is the S1 motif domain.

It belongs to the polyribonucleotide nucleotidyltransferase family. Requires Mg(2+) as cofactor.

It localises to the cytoplasm. The enzyme catalyses RNA(n+1) + phosphate = RNA(n) + a ribonucleoside 5'-diphosphate. Involved in mRNA degradation. Catalyzes the phosphorolysis of single-stranded polyribonucleotides processively in the 3'- to 5'-direction. The chain is Polyribonucleotide nucleotidyltransferase from Renibacterium salmoninarum (strain ATCC 33209 / DSM 20767 / JCM 11484 / NBRC 15589 / NCIMB 2235).